The primary structure comprises 524 residues: GMP synthase [glutamine-hydrolyzing] (524 aa).

Positions 8–206 (KILILDFGSQ…VRKLCQCEAR (199 aa)) constitute a Glutamine amidotransferase type-1 domain. Cys85 serves as the catalytic Nucleophile. Residues His180 and Glu182 contribute to the active site. Positions 207 to 399 (WTTGNIVEDA…LGLPYEMVYR (193 aa)) constitute a GMPS ATP-PPase domain. 234–240 (SGGVDSS) contributes to the ATP binding site.

Homodimer.

It catalyses the reaction XMP + L-glutamine + ATP + H2O = GMP + L-glutamate + AMP + diphosphate + 2 H(+). The protein operates within purine metabolism; GMP biosynthesis; GMP from XMP (L-Gln route): step 1/1. Its function is as follows. Catalyzes the synthesis of GMP from XMP. The chain is GMP synthase [glutamine-hydrolyzing] from Methylococcus capsulatus (strain ATCC 33009 / NCIMB 11132 / Bath).